The following is a 126-amino-acid chain: uncharacterized protein (126 aa).

A signal peptide spans 1–23 (MLKKLIMGFFLLILLGIAGVAVM).

This is an uncharacterized protein from Archaeoglobus fulgidus (strain ATCC 49558 / DSM 4304 / JCM 9628 / NBRC 100126 / VC-16).